Here is a 63-residue protein sequence, read N- to C-terminus: Large ribosomal subunit protein uL30 (63 aa).

It belongs to the universal ribosomal protein uL30 family. As to quaternary structure, part of the 50S ribosomal subunit.

The sequence is that of Large ribosomal subunit protein uL30 from Coxiella burnetii (strain CbuK_Q154) (Coxiella burnetii (strain Q154)).